Consider the following 296-residue polypeptide: Mycothiol acetyltransferase (296 aa).

N-acetyltransferase domains lie at 17–146 (YNHR…AVYD) and 156–296 (LKTA…VYEK). Glu44 provides a ligand contact to 1D-myo-inositol 2-(L-cysteinylamino)-2-deoxy-alpha-D-glucopyranoside. Residue 81-83 (LAV) coordinates acetyl-CoA. 1D-myo-inositol 2-(L-cysteinylamino)-2-deoxy-alpha-D-glucopyranoside is bound by residues Glu183, Lys222, and Glu230. Residues 234 to 236 (VGL) and 241 to 247 (RGKGLGD) contribute to the acetyl-CoA site. Tyr268 is a 1D-myo-inositol 2-(L-cysteinylamino)-2-deoxy-alpha-D-glucopyranoside binding site.

This sequence belongs to the acetyltransferase family. MshD subfamily. Monomer.

The catalysed reaction is 1D-myo-inositol 2-(L-cysteinylamino)-2-deoxy-alpha-D-glucopyranoside + acetyl-CoA = mycothiol + CoA + H(+). Functionally, catalyzes the transfer of acetyl from acetyl-CoA to desacetylmycothiol (Cys-GlcN-Ins) to form mycothiol. The protein is Mycothiol acetyltransferase of Corynebacterium efficiens (strain DSM 44549 / YS-314 / AJ 12310 / JCM 11189 / NBRC 100395).